We begin with the raw amino-acid sequence, 638 residues long: Plasma kallikrein (638 aa).

The N-terminal stretch at 1 to 19 (MILFKQVGYFVSLFATVSC) is a signal peptide. 4 Apple domains span residues 21 to 104 (CLSQ…LKQC), 111 to 194 (CHQD…LKSC), 201 to 284 (CPMD…LFTC), and 292 to 375 (CHFK…LRLC). Cystine bridges form between C21–C104, C47–C77, C51–C57, C111–C194, C137–C166, C141–C147, C201–C284, C227–C256, C231–C237, C292–C375, C318–C347, C322–C328, C340–C345, C383–C503, C419–C435, C517–C584, C548–C563, and C574–C602. N127 is a glycosylation site (N-linked (GlcNAc...) asparagine). N215 carries an N-linked (GlcNAc...) asparagine glycan. N308 carries N-linked (GlcNAc...) asparagine glycosylation. Residues 391-626 (IVGGTNSSLG…YIDWILEKIQ (236 aa)) enclose the Peptidase S1 domain. N396 is a glycosylation site (N-linked (GlcNAc...) asparagine). The Charge relay system role is filled by H434. N453 is a glycosylation site (N-linked (GlcNAc...) asparagine). Catalysis depends on D483, which acts as the Charge relay system. N-linked (GlcNAc...) asparagine glycosylation is present at N494. The active-site Charge relay system is S578.

It belongs to the peptidase S1 family. Plasma kallikrein subfamily. As to quaternary structure, forms a heterodimer with SERPINA5. The zymogen is activated by factor XIIa, which cleaves the molecule into a light chain, which contains the active site, and a heavy chain, which associates with HMW kininogen. These chains are linked by one or more disulfide bonds.

It is found in the secreted. It catalyses the reaction Cleaves selectively Arg-|-Xaa and Lys-|-Xaa bonds, including Lys-|-Arg and Arg-|-Ser bonds in (human) kininogen to release bradykinin.. Inhibited by SERPINA5. Its function is as follows. The enzyme cleaves Lys-Arg and Arg-Ser bonds. It activates, in a reciprocal reaction, factor XII after its binding to a negatively charged surface. It also releases bradykinin from HMW kininogen and may also play a role in the renin-angiotensin system by converting prorenin into renin. In Rattus norvegicus (Rat), this protein is Plasma kallikrein (Klkb1).